The sequence spans 352 residues: tRNA-specific 2-thiouridylase MnmA (352 aa).

Residues 11-18 (AMSGGVDS) and methionine 37 contribute to the ATP site. Cysteine 101 functions as the Nucleophile in the catalytic mechanism. Cysteine 101 and cysteine 197 are oxidised to a cystine. Glycine 125 is an ATP binding site. The interaction with tRNA stretch occupies residues 147–149 (KDQ). Cysteine 197 acts as the Cysteine persulfide intermediate in catalysis. The interval 302 to 303 (RY) is interaction with tRNA.

This sequence belongs to the MnmA/TRMU family.

The protein resides in the cytoplasm. It carries out the reaction S-sulfanyl-L-cysteinyl-[protein] + uridine(34) in tRNA + AH2 + ATP = 2-thiouridine(34) in tRNA + L-cysteinyl-[protein] + A + AMP + diphosphate + H(+). Catalyzes the 2-thiolation of uridine at the wobble position (U34) of tRNA, leading to the formation of s(2)U34. The protein is tRNA-specific 2-thiouridylase MnmA of Syntrophotalea carbinolica (strain DSM 2380 / NBRC 103641 / GraBd1) (Pelobacter carbinolicus).